Here is a 137-residue protein sequence, read N- to C-terminus: MGAHLVRRYLGDASVEPDPLQMPTFPPDYGFPERKEREMVATQQEMMDAQLRLQLRDYCAHYLIRLLKCKRDSFPNFLACKQERHDWDYCEHRDYVMRMKEFERERRLLQRKKRREKKAAELAKGQGPGEVDPKVAL.

Gly2 carries the N-myristoyl glycine lipid modification. The CHCH domain occupies 56–98 (RDYCAHYLIRLLKCKRDSFPNFLACKQERHDWDYCEHRDYVMR). Positions 59–69 (CAHYLIRLLKC) match the Cx9C motif 1 motif. Intrachain disulfides connect Cys59-Cys90 and Cys69-Cys80. Ser73 bears the Phosphoserine mark. Positions 80–90 (CKQERHDWDYC) match the Cx9C motif 2 motif. Residues 113–137 (KRREKKAAELAKGQGPGEVDPKVAL) are disordered.

The protein belongs to the complex I NDUFB7 subunit family. As to quaternary structure, complex I is composed of 45 different subunits.

Its subcellular location is the mitochondrion inner membrane. It localises to the mitochondrion intermembrane space. Accessory subunit of the mitochondrial membrane respiratory chain NADH dehydrogenase (Complex I), that is believed not to be involved in catalysis. Complex I functions in the transfer of electrons from NADH to the respiratory chain. The immediate electron acceptor for the enzyme is believed to be ubiquinone. The polypeptide is NADH dehydrogenase [ubiquinone] 1 beta subcomplex subunit 7 (NDUFB7) (Gorilla gorilla gorilla (Western lowland gorilla)).